The primary structure comprises 2582 residues: Chromodomain-helicase-DNA-binding protein 8 (2582 aa).

4 disordered regions span residues 22–111, 136–155, 253–283, and 349–377; these read DDSF…PVLQ, MGVS…PSQS, VKGS…TQGE, and QKIQ…PLTL. Polar residues-rich tracts occupy residues 42 to 51, 94 to 111, and 141 to 155; these read SLDSLDQMNQ, DYTT…PVLQ, and TGVS…PSQS. The span at 255 to 267 shows a compositional bias: low complexity; it reads GSAPAGNPGAAGP. The span at 355–372 shows a compositional bias: pro residues; that stretch reads PQPPSSQPQPQPQPPPSA. The residue at position 434 (Ser-434) is a Phosphoserine. Disordered stretches follow at residues 475 to 585 and 598 to 617; these read RARG…VKRK and DEEE…PILP. The segment covering 495 to 518 has biased composition (basic and acidic residues); sequence RPEEEGEKKRRKKSSGERLKEEKP. Residues Ser-555 and Ser-564 each carry the phosphoserine modification. Positions 574 to 585 are enriched in basic residues; it reads QKRRSNRQVKRK. Residue Lys-611 forms a Glycyl lysine isopeptide (Lys-Gly) (interchain with G-Cter in SUMO) linkage. 2 consecutive Chromo domains span residues 644–711 and 726–792; these read AIVD…AQMR and VEVD…RVNR. Residues 825–999 form the Helicase ATP-binding domain; it reads LFNWYNRQNC…FSLLHFLEPS (175 aa). 838-845 contributes to the ATP binding site; sequence DEMGLGKT. Residues 950–953 carry the DEAH box motif; sequence DEAH. The Helicase C-terminal domain occupies 1139 to 1290; sequence LIDKLLPKLK…KAVLQSMSGR (152 aa). Phosphoserine is present on residues Ser-1422 and Ser-1426. A disordered region spans residues 1694-1715; that stretch reads EDPEYKPLQGPPKDPDDEGDPL. Residues 1791–2304 are interaction with FAM124B; sequence IARREKQQRW…LVELEVECME (514 aa). Phosphoserine occurs at positions 1978 and 1980. The segment at 1990-2019 is disordered; that stretch reads QCTSRTASPSPLRPDAPVEKSPEESTVQVP. Thr-1995 carries the phosphothreonine modification. Residues Ser-1997, Ser-1999, and Ser-2010 each carry the phosphoserine modification. Lys-2027 participates in a covalent cross-link: Glycyl lysine isopeptide (Lys-Gly) (interchain with G-Cter in SUMO2). Ser-2040, Ser-2070, and Ser-2072 each carry phosphoserine. The disordered stretch occupies residues 2045–2120; that stretch reads VRVGSSDTAP…RSRPKLYDEE (76 aa). The span at 2065–2074 shows a compositional bias: acidic residues; the sequence is EDEDDSDSEL. The span at 2077–2096 shows a compositional bias: low complexity; the sequence is SKLSPSSSSSSSSSSSSSST. The span at 2104–2118 shows a compositional bias: basic and acidic residues; it reads EEKLTADRSRPKLYD. 3 positions are modified to phosphoserine: Ser-2184, Ser-2202, and Ser-2204. The tract at residues 2187-2233 is disordered; sequence VTAGGILGPGNHLLDSPSLTPGEDGDSPVPTPRSGSAASMAEEEASA. The residue at position 2206 (Thr-2206) is a Phosphothreonine. Ser-2213 bears the Phosphoserine mark. Thr-2217 is subject to Phosphothreonine. Positions 2222-2233 are enriched in low complexity; it reads SAASMAEEEASA. Ser-2225 bears the Phosphoserine mark. Lys-2258 is covalently cross-linked (Glycyl lysine isopeptide (Lys-Gly) (interchain with G-Cter in SUMO2)). Residues 2486-2582 are disordered; sequence HVDSSTMLHH…NSDSSEDADD (97 aa). Residues 2493–2511 show a composition bias toward basic residues; that stretch reads LHHHHHHPHPHHHHHHHPG. Residues 2514-2529 are compositionally biased toward low complexity; it reads TTGYPSSPATTTSGTA. A Phosphoserine modification is found at Ser-2520. The segment covering 2537–2551 has biased composition (acidic residues); sequence PEDDDEEEDEEDDDL.

The protein belongs to the SNF2/RAD54 helicase family. CHD8 subfamily. Interacts with CTNNB1 and PIAS3. Component of some MLL1/MLL complex, at least composed of the core components KMT2A/MLL1, ASH2L, HCFC1/HCF1, WDR5 and RBBP5, as well as the facultative components BACC1, CHD8, E2F6, HSP70, INO80C, KANSL1, LAS1L, MAX, MCRS1, MGA, KAT8/MOF, PELP1, PHF20, PRP31, RING2, RUVB1/TIP49A, RUVB2/TIP49B, SENP3, TAF1, TAF4, TAF6, TAF7, TAF9 and TEX10. Interacts with CHD7. Interacts with FAM124B. Interacts with p53/TP53 and histone H1. Interacts with CTCF. Interacts with TLK2. Interacts with HNRNPL in an RNA-dependent manner. In terms of processing, sumoylated.

It is found in the nucleus. It catalyses the reaction ATP + H2O = ADP + phosphate + H(+). Its function is as follows. ATP-dependent chromatin-remodeling factor, it slides nucleosomes along DNA; nucleosome sliding requires ATP. Acts as a transcription repressor by remodeling chromatin structure and recruiting histone H1 to target genes. Suppresses p53/TP53-mediated apoptosis by recruiting histone H1 and preventing p53/TP53 transactivation activity. Acts as a negative regulator of Wnt signaling pathway by regulating beta-catenin (CTNNB1) activity. Negatively regulates CTNNB1-targeted gene expression by being recruited specifically to the promoter regions of several CTNNB1 responsive genes. Involved in both enhancer blocking and epigenetic remodeling at chromatin boundary via its interaction with CTCF. Acts as a suppressor of STAT3 activity by suppressing the LIF-induced STAT3 transcriptional activity. Also acts as a transcription activator via its interaction with ZNF143 by participating in efficient U6 RNA polymerase III transcription. Regulates alternative splicing of a core group of genes involved in neuronal differentiation, cell cycle and DNA repair. Enables H3K36me3-coupled transcription elongation and co-transcriptional RNA processing likely via interaction with HNRNPL. In Mus musculus (Mouse), this protein is Chromodomain-helicase-DNA-binding protein 8.